Here is a 445-residue protein sequence, read N- to C-terminus: Glutamate-1-semialdehyde 2,1-aminomutase (445 aa).

K263 is subject to N6-(pyridoxal phosphate)lysine.

The protein belongs to the class-III pyridoxal-phosphate-dependent aminotransferase family. HemL subfamily. Requires pyridoxal 5'-phosphate as cofactor.

It is found in the cytoplasm. It carries out the reaction (S)-4-amino-5-oxopentanoate = 5-aminolevulinate. It functions in the pathway porphyrin-containing compound metabolism; protoporphyrin-IX biosynthesis; 5-aminolevulinate from L-glutamyl-tRNA(Glu): step 2/2. In Haloarcula marismortui (strain ATCC 43049 / DSM 3752 / JCM 8966 / VKM B-1809) (Halobacterium marismortui), this protein is Glutamate-1-semialdehyde 2,1-aminomutase.